A 266-amino-acid polypeptide reads, in one-letter code: Putative pyruvate, phosphate dikinase regulatory protein (266 aa).

149-156 (GVSRTSKT) contributes to the ADP binding site.

Belongs to the pyruvate, phosphate/water dikinase regulatory protein family. PDRP subfamily.

It carries out the reaction N(tele)-phospho-L-histidyl/L-threonyl-[pyruvate, phosphate dikinase] + ADP = N(tele)-phospho-L-histidyl/O-phospho-L-threonyl-[pyruvate, phosphate dikinase] + AMP + H(+). The catalysed reaction is N(tele)-phospho-L-histidyl/O-phospho-L-threonyl-[pyruvate, phosphate dikinase] + phosphate + H(+) = N(tele)-phospho-L-histidyl/L-threonyl-[pyruvate, phosphate dikinase] + diphosphate. Its function is as follows. Bifunctional serine/threonine kinase and phosphorylase involved in the regulation of the pyruvate, phosphate dikinase (PPDK) by catalyzing its phosphorylation/dephosphorylation. This chain is Putative pyruvate, phosphate dikinase regulatory protein, found in Geobacillus sp. (strain WCH70).